Consider the following 184-residue polypeptide: uncharacterized protein (184 aa).

Residues 5 to 27 (YLLATAMFLIVCVYVISETVNLH) form a helical membrane-spanning segment.

It localises to the membrane. This is an uncharacterized protein from Methanocaldococcus jannaschii (strain ATCC 43067 / DSM 2661 / JAL-1 / JCM 10045 / NBRC 100440) (Methanococcus jannaschii).